Consider the following 129-residue polypeptide: Small ribosomal subunit protein uS13 (129 aa).

The span at 92–114 (HKHNLPVRGQRTKTNARTRRGPR) shows a compositional bias: basic residues. Positions 92–129 (HKHNLPVRGQRTKTNARTRRGPRKTVAGRGQKRGATKK) are disordered.

The protein belongs to the universal ribosomal protein uS13 family. In terms of assembly, part of the 30S ribosomal subunit. Forms a loose heterodimer with protein S19. Forms two bridges to the 50S subunit in the 70S ribosome.

Its function is as follows. Located at the top of the head of the 30S subunit, it contacts several helices of the 16S rRNA. In the 70S ribosome it contacts the 23S rRNA (bridge B1a) and protein L5 of the 50S subunit (bridge B1b), connecting the 2 subunits; these bridges are implicated in subunit movement. Contacts the tRNAs in the A and P-sites. The chain is Small ribosomal subunit protein uS13 from Dehalococcoides mccartyi (strain ATCC BAA-2266 / KCTC 15142 / 195) (Dehalococcoides ethenogenes (strain 195)).